The sequence spans 304 residues: Ribosomal RNA small subunit methyltransferase H (304 aa).

Residues 37 to 39 (GGH), Asp57, Phe79, Asp100, and His107 contribute to the S-adenosyl-L-methionine site.

The protein belongs to the methyltransferase superfamily. RsmH family.

The protein resides in the cytoplasm. The catalysed reaction is cytidine(1402) in 16S rRNA + S-adenosyl-L-methionine = N(4)-methylcytidine(1402) in 16S rRNA + S-adenosyl-L-homocysteine + H(+). In terms of biological role, specifically methylates the N4 position of cytidine in position 1402 (C1402) of 16S rRNA. In Phocaeicola vulgatus (strain ATCC 8482 / DSM 1447 / JCM 5826 / CCUG 4940 / NBRC 14291 / NCTC 11154) (Bacteroides vulgatus), this protein is Ribosomal RNA small subunit methyltransferase H.